The primary structure comprises 302 residues: Cyclin-dependent kinase 1-B (302 aa).

Residues 4–287 (YTKIEKIGEG…ARKAMLHPYF (284 aa)) form the Protein kinase domain. ATP is bound by residues 10–18 (IGEGTYGVV) and lysine 33. Residue threonine 14 is modified to Phosphothreonine. Tyrosine 15 carries the post-translational modification Phosphotyrosine; by wee1 and wee2. Aspartate 128 (proton acceptor) is an active-site residue. A Phosphothreonine; by cak modification is found at threonine 161. Position 277 is a phosphoserine (serine 277).

The protein belongs to the protein kinase superfamily. CMGC Ser/Thr protein kinase family. CDC2/CDKX subfamily. As to quaternary structure, forms a stable but non-covalent complex with a regulatory subunit and with a cyclin. Interacts with spdya. Phosphorylation at Tyr-15 by wee1 and wee2 inhibits the protein kinase activity and acts negative regulator of entry into mitosis (G2 to M transition).

Its subcellular location is the nucleus. The catalysed reaction is L-seryl-[protein] + ATP = O-phospho-L-seryl-[protein] + ADP + H(+). It catalyses the reaction L-threonyl-[protein] + ATP = O-phospho-L-threonyl-[protein] + ADP + H(+). It carries out the reaction [DNA-directed RNA polymerase] + ATP = phospho-[DNA-directed RNA polymerase] + ADP + H(+). With respect to regulation, phosphorylation at Thr-14 or Tyr-15 inactivates the enzyme, while phosphorylation at Thr-161 activates it. Its function is as follows. Plays a key role in the control of the eukaryotic cell cycle by modulating the centrosome cycle as well as mitotic onset; promotes G2-M transition via association with multiple interphase cyclins. During G2 and early mitosis, CDC25A/B/C-mediated dephosphorylation activates CDK1/cyclin complexes which phosphorylate several substrates that trigger at least centrosome separation, Golgi dynamics, nuclear envelope breakdown and chromosome condensation. Once chromosomes are condensed and aligned at the metaphase plate, CDK1 activity is switched off by WEE1- and PKMYT1-mediated phosphorylation to allow sister chromatid separation, chromosome decondensation, reformation of the nuclear envelope and cytokinesis. Catalyzes lamin (LMNA, LMNB1 and LMNB2) phosphorylation at the onset of mitosis, promoting nuclear envelope breakdown. The sequence is that of Cyclin-dependent kinase 1-B (cdk1-b) from Xenopus laevis (African clawed frog).